Reading from the N-terminus, the 481-residue chain is MMGRKNSKQVRYSNRLILINRLSQLSDPLICQILSHLPIKEVVTTSVLSTRWKNIWLSVPSLELIYSIFPNFNTFRSFGDRFFDSTRVSCIHNLKLYFDEHDACYLTSWINAFVTRNIRRLYVRRVRGNYFHELPLSLYVCETLVSLKLFHLTLVDPEFVSLPCLKIMHLNYVWFPNDATFERLVSSCPVLEDLKIDVLWNDGRVYRVKSRSLKRLRLLRSSTMVFDSVPGVVIDAPLICYLRINDRVSETYILNDLESNAKLDIHLDFGSEDFGEPSVSSRRSRIRSFLPAISKVMGLKISENTFKVIHHYSNLAQLPQFDNTSRLHVTLRVSELKWLPNFLECCPNLKSLIVAFNGDFEKMGSEEMNQISFLLRMKRIVDMTIFMYTSKVLLHSDNINQLSFSSVPKCLLSSLQFVELNAQILRFDGEILNLAKYFLENSSILQKLTLHPNKYGSTYANMLHKFRRRSRTCQFILTDLE.

The 51-residue stretch at 19–69 folds into the F-box domain; that stretch reads INRLSQLSDPLICQILSHLPIKEVVTTSVLSTRWKNIWLSVPSLELIYSIF. 3 LRR repeats span residues 123 to 151, 173 to 198, and 328 to 356; these read VRRVRGNYFHELPLSLYVCETLVSLKLFH, VWFPNDATFERLVSSCPVLEDLKIDV, and HVTLRVSELKWLPNFLECCPNLKSLIVAF. The 52-residue stretch at 401-452 folds into the FBD domain; the sequence is QLSFSSVPKCLLSSLQFVELNAQILRFDGEILNLAKYFLENSSILQKLTLHP.

This chain is Putative F-box/FBD/LRR-repeat protein At5g25850, found in Arabidopsis thaliana (Mouse-ear cress).